A 910-amino-acid polypeptide reads, in one-letter code: Seizure 6-like protein 2 (910 aa).

The first 27 residues, 1–27, serve as a signal peptide directing secretion; sequence MGTPRAQHPPPPQLLFLILLSCPWIQG. Residues 28–844 lie on the Extracellular side of the membrane; sequence LPLKEEEILP…DPSRQLEGGN (817 aa). The segment at 41 to 48 is O-glycosylated at one site; the sequence is SETPTVAS. The interval 65 to 152 is disordered; it reads EMGYLPGSDR…PLGPEGGEEE (88 aa). Residues 123-145 show a composition bias toward pro residues; that stretch reads LTPPPGTTAPPPPSPASPGPPLG. Residues Cys-173 and Cys-202 are joined by a disulfide bond. The 114-residue stretch at 173–286 folds into the CUB 1 domain; the sequence is CNNNISEGEG…GGFRIHYQAY (114 aa). N-linked (GlcNAc...) asparagine glycans are attached at residues Asn-176, Asn-222, and Asn-247. The Sushi 1 domain maps to 288 to 347; the sequence is LSCGFPPRPAHGDVSVTDLHPGGTATFHCDSGYQLQGEETLICLNGTRPSWNGETPSCMA. 6 cysteine pairs are disulfide-bonded: Cys-290–Cys-330, Cys-316–Cys-345, Cys-349–Cys-376, Cys-464–Cys-508, Cys-491–Cys-523, and Cys-527–Cys-553. Asn-332, Asn-355, Asn-373, Asn-473, and Asn-517 each carry an N-linked (GlcNAc...) asparagine glycan. The CUB 2 domain occupies 349–459; sequence CGGTIHNATL…LLLSLRFEAF (111 aa). A Sushi 2 domain is found at 462–525; sequence DRCFAPFLAH…WNDTEPACKA (64 aa). One can recognise a CUB 3 domain in the interval 527–638; sequence CGGELSEPAG…QGFVLHFKEV (112 aa). N-linked (GlcNAc...) asparagine glycosylation is present at Asn-641. Sushi domains lie at 642–701, 703–766, and 769–830; these read DTCP…ACQK, MTCA…KCAL, and EPCL…LCKV. 6 cysteine pairs are disulfide-bonded: Cys-644/Cys-686, Cys-672/Cys-699, Cys-705/Cys-747, Cys-733/Cys-764, Cys-771/Cys-813, and Cys-799/Cys-828. The helical transmembrane segment at 845–865 threads the bilayer; it reads LALAILLPLGLVIVLGSGVYI. Topologically, residues 866-910 are cytoplasmic; that stretch reads YYTKLQGKSLFGFSGSHSYSPITVESDFSNPLYEAGDTREYEVSI.

It belongs to the SEZ6 family. O-glycosylated with core 1 or possibly core 8 glycans.

Its subcellular location is the cell membrane. The protein resides in the endoplasmic reticulum membrane. May contribute to specialized endoplasmic reticulum functions in neurons. The chain is Seizure 6-like protein 2 (SEZ6L2) from Homo sapiens (Human).